Here is a 191-residue protein sequence, read N- to C-terminus: Large ribosomal subunit protein bL9 (191 aa).

Residues alanine 151–glutamate 191 form a disordered region.

The protein belongs to the bacterial ribosomal protein bL9 family.

In terms of biological role, binds to the 23S rRNA. This Sinorhizobium medicae (strain WSM419) (Ensifer medicae) protein is Large ribosomal subunit protein bL9.